Consider the following 180-residue polypeptide: Large ribosomal subunit protein uL5 (180 aa).

It belongs to the universal ribosomal protein uL5 family. As to quaternary structure, part of the 50S ribosomal subunit; part of the 5S rRNA/L5/L18/L25 subcomplex. Contacts the 5S rRNA and the P site tRNA. Forms a bridge to the 30S subunit in the 70S ribosome.

Its function is as follows. This is one of the proteins that bind and probably mediate the attachment of the 5S RNA into the large ribosomal subunit, where it forms part of the central protuberance. In the 70S ribosome it contacts protein S13 of the 30S subunit (bridge B1b), connecting the 2 subunits; this bridge is implicated in subunit movement. Contacts the P site tRNA; the 5S rRNA and some of its associated proteins might help stabilize positioning of ribosome-bound tRNAs. In Rippkaea orientalis (strain PCC 8801 / RF-1) (Cyanothece sp. (strain PCC 8801)), this protein is Large ribosomal subunit protein uL5.